We begin with the raw amino-acid sequence, 420 residues long: Torsin-4A (420 aa).

The helical transmembrane segment at Cys-130–Asp-150 threads the bilayer. ATP is bound at residue Gly-202 to Ser-209.

The protein belongs to the ClpA/ClpB family. Torsin subfamily.

It is found in the membrane. This is Torsin-4A (tor4a) from Xenopus tropicalis (Western clawed frog).